We begin with the raw amino-acid sequence, 362 residues long: G-protein coupled receptor 6 (362 aa).

Topologically, residues 1-74 (MNASAASLND…PGLLLPAVNP (74 aa)) are extracellular. N-linked (GlcNAc...) asparagine glycans are attached at residues N2, N9, and N51. Residues 75-94 (WDVLLCVSGTVIAGENALVV) traverse the membrane as a helical segment. At 95–106 (ALIASTPALRTP) the chain is on the cytoplasmic side. A helical membrane pass occupies residues 107–130 (MFVLVGSLATADLLAGCGLILHFV). The Extracellular segment spans residues 131–142 (FQYLVPSETVSL). The chain crosses the membrane as a helical span at residues 143-164 (LTVGFLVASFAASVSSLLAITV). Residues 165 to 185 (DRYLSLYNALTYYSRRTLLGV) lie on the Cytoplasmic side of the membrane. Residues 186-205 (HLLLAATWTVSLGLGLLPVL) form a helical membrane-spanning segment. Over 206–230 (GWNCLAERAACSVVRPLARSHVALL) the chain is Extracellular. Residues 231–249 (SAAFFMVFGIMLHLYVRIC) form a helical membrane-spanning segment. The Cytoplasmic portion of the chain corresponds to 250–277 (QVVWRHAHQIALQQHCLAPPHLAATRKG). The chain crosses the membrane as a helical span at residues 278–304 (VGTLAVVLGTFGASWLPFAIYCVVGSH). Residues 305–309 (EDPAV) are Extracellular-facing. The chain crosses the membrane as a helical span at residues 310-331 (YTYATLLPATYNSMINPIIYAF). At 332 to 362 (RNQEIQRALWLLLCGCFQSKVPFRSRSPSEV) the chain is on the cytoplasmic side. C345 carries S-palmitoyl cysteine lipidation. Phosphoserine occurs at positions 356, 358, and 360.

It belongs to the G-protein coupled receptor 1 family.

The protein resides in the cell membrane. Its function is as follows. Orphan receptor with constitutive G(s) signaling activity that activate cyclic AMP. Promotes neurite outgrowth and blocks myelin inhibition in neurons. The chain is G-protein coupled receptor 6 (GPR6) from Homo sapiens (Human).